The following is a 323-amino-acid chain: Serine/threonine-protein kinase-transforming protein raf (323 aa).

The region spanning 24-284 (VMLSTRIGSG…PQILSSIELL (261 aa)) is the Protein kinase domain. ATP is bound by residues 30–38 (IGSGSFGTV) and lysine 50. Aspartate 143 acts as the Proton acceptor in catalysis.

This sequence belongs to the protein kinase superfamily. TKL Ser/Thr protein kinase family. RAF subfamily.

It carries out the reaction L-seryl-[protein] + ATP = O-phospho-L-seryl-[protein] + ADP + H(+). The catalysed reaction is L-threonyl-[protein] + ATP = O-phospho-L-threonyl-[protein] + ADP + H(+). The chain is Serine/threonine-protein kinase-transforming protein raf (V-RAF) from Murine sarcoma virus 3611.